The primary structure comprises 613 residues: DBH-like monooxygenase protein 1 (613 aa).

Residues 1–19 (MCGWPLLVLWALLPATAAG) form the signal peptide. The Lumenal segment spans residues 20 to 587 (SPGRSYPHRV…PLVCEKAASP (568 aa)). A DOMON domain is found at 35–148 (GKYWLHWGRQ…STVRVIWAYH (114 aa)). N114 carries an N-linked (GlcNAc...) asparagine glycan. Y203 is an active-site residue. 2 disulfides stabilise this stretch: C205/C257 and C242/C269. Residues H235 and H236 each coordinate Cu cation. N247 carries N-linked (GlcNAc...) asparagine glycosylation. Cu cation-binding residues include H307, H389, H391, and M464. 3 cysteine pairs are disulfide-bonded: C364–C480, C368–C550, and C443–C465. The active site involves H389. N476 and N517 each carry an N-linked (GlcNAc...) asparagine glycan. The helical transmembrane segment at 588-608 (PLHGIFSLRLLTCALLLGSML) threads the bilayer.

This sequence belongs to the copper type II ascorbate-dependent monooxygenase family. The cofactor is Cu(2+). N-glycosylated. Broadly exprressed, with highest levels in salivary gland and ovary.

The protein localises to the endoplasmic reticulum membrane. In Mus musculus (Mouse), this protein is DBH-like monooxygenase protein 1 (Moxd1).